A 962-amino-acid chain; its full sequence is MTKQTLTQLEQHDLFLRRHIGPDSSQQQEMLNYVGAESLDDLTAQIVPESIRLSQELSIGDSCGEAEGIAYIRGLAKQNQVFKSYIGMGYYGTQVPNVILRNVFENPGWYTAYTPYQPEIAQGRLEAILNFQQVSMDLTGLDLASASLLDEATAAAEAMALAKRVSKAKKANIFFVADDVFPQTLDVVKTRAECFGFEVVVGPAHEAVNHELFGALFQYSNRFGQITDFTDLFAELRAKNVIVTVAADIMALVLLKSPGAMGADVVFGSAQRFGVPMGFGGPHAAFFVARDEHKRSMPGRIIGVSKDTRGNRALRMAMQTREQHIRREKANSNICTAQILLANMASFYAVFHGPQGLKTIASRINRFTDILAAGLQAKGVSLVNNTWFDTISIKGLDVAAVNARALAAEMNLRFDADGIVGVSLDETTLRTDIDALFDVILGAGHGLDVAALDAQIVAQGSQSIPEALVRQDAILTHPTFNRYQSETEMMRYIKRLESKDLALNYSMISLGSCTMKLNAAVEMLPVSWPEFANMHPFCPLDQAKGYTQLIEELSSWLVNVTGYDAVCIQPNSGAQGEYAGLLAIRKYHESRGQAHRNICLIPQSAHGTNPASAQLAGMQVVVTACDKQGNVDLEDLKAKAAEVAENLSCIMITYPSTHGVYEESIREICNIVHQHGGQVYLDGANMNAQVGLTSPGFIGADVSHLNLHKTFAIPHGGGGPGMGPIGVKAHLAPFVAGHVVVKPGRESDNNGAVSAAPYGSAGILPISWMYIKLLGSNGLKKSTQTALLNANYVMKKLSEHYPVLFRGRNDRVAHECIIDLRPIKEASGVTEMDIAKRLNDYGFHAPTMSFPVAGTLMIEPTESESKVELDRFIDAMVSIRAEIAKVEAGEWPADNNPLHNAPHTMADIMDSAFDSRPYSREVAVFPSAAVRTNKFWPTVNRIDDVYGDRNLFCACVPLSDYE.

Position 709 is an N6-(pyridoxal phosphate)lysine (K709).

Belongs to the GcvP family. As to quaternary structure, the glycine cleavage system is composed of four proteins: P, T, L and H. Pyridoxal 5'-phosphate serves as cofactor.

The catalysed reaction is N(6)-[(R)-lipoyl]-L-lysyl-[glycine-cleavage complex H protein] + glycine + H(+) = N(6)-[(R)-S(8)-aminomethyldihydrolipoyl]-L-lysyl-[glycine-cleavage complex H protein] + CO2. Functionally, the glycine cleavage system catalyzes the degradation of glycine. The P protein binds the alpha-amino group of glycine through its pyridoxal phosphate cofactor; CO(2) is released and the remaining methylamine moiety is then transferred to the lipoamide cofactor of the H protein. This chain is Glycine dehydrogenase (decarboxylating), found in Shewanella sp. (strain MR-4).